A 752-amino-acid chain; its full sequence is Pre-mRNA-processing factor 39 (752 aa).

The tract at residues 1–148 (MEDSGESMTG…DPAAPQEPEL (148 aa)) is disordered. The span at 28–42 (TTGTDDVTGLSTSDL) shows a compositional bias: polar residues. 3 stretches are compositionally biased toward low complexity: residues 43-56 (TTEQ…QTQP), 76-94 (QSAS…PPES), and 133-148 (EPAA…EPEL). HAT repeat units follow at residues 180 to 212 (NHLL…IERK), 214 to 246 (GYIQ…FLRE), and 254 to 289 (EAES…WETE). The interval 347–374 (NKPSGDEDAETEAPGEELPPGTEDLPDP) is disordered. The segment covering 352–361 (DEDAETEAPG) has biased composition (acidic residues). 2 HAT repeats span residues 408-440 (AFEE…FELE) and 442-474 (GTPE…YLES). The span at 678 to 699 (SFKRKAENGSEEPDAKRQRTDD) shows a compositional bias: basic and acidic residues. Positions 678-703 (SFKRKAENGSEEPDAKRQRTDDQSVA) are disordered. An HAT 6 repeat occupies 700–731 (QSVASGQMMDMQANHAGYNYNNWYQYNSWGSQ).

It belongs to the PRP39 family.

It localises to the nucleus. Functionally, involved in pre-mRNA splicing. The polypeptide is Pre-mRNA-processing factor 39 (prpf39) (Danio rerio (Zebrafish)).